The sequence spans 202 residues: Flagellar transcriptional regulator FlhC (202 aa).

Zn(2+) contacts are provided by C137, C140, C157, and C160.

This sequence belongs to the FlhC family. Heterohexamer composed of two FlhC and four FlhD subunits. Each FlhC binds a FlhD dimer, forming a heterotrimer, and a hexamer assembles by dimerization of two heterotrimers. It depends on Zn(2+) as a cofactor.

The protein localises to the cytoplasm. Its function is as follows. Functions in complex with FlhD as a master transcriptional regulator that regulates transcription of several flagellar and non-flagellar operons by binding to their promoter region. Activates expression of class 2 flagellar genes, including fliA, which is a flagellum-specific sigma factor that turns on the class 3 genes. Also regulates genes whose products function in a variety of physiological pathways. The sequence is that of Flagellar transcriptional regulator FlhC from Variovorax paradoxus (strain S110).